The primary structure comprises 842 residues: Pentatricopeptide repeat-containing protein At3g23020 (842 aa).

The interval 40–61 is disordered; that stretch reads YVPGTHESDKGPQRSTRNGDRG. Basic and acidic residues predominate over residues 45–59; the sequence is HESDKGPQRSTRNGD. PPR repeat units follow at residues 186-220, 221-255, 256-290, 297-331, 332-362, 366-400, 401-435, 436-470, 474-500, 504-538, 539-573, 574-608, 609-643, 644-674, 682-712, 716-750, 751-785, and 786-820; these read NVIH…GIKP, INST…GMQP, DEVT…ENKA, SSYT…GIVP, TTVT…MKLH, DTRT…GLKP, DPVS…NVEI, DEYT…GNMS, YSAN…CQEV, TVIE…GVTP, DKCT…GYVS, DCIP…NIEP, DVVV…GIPG, NSVI…LLQS, DVYT…MKQR, NEFT…KILT, DPLS…GIQP, and DDST…EIKR.

Belongs to the PPR family. P subfamily.

The chain is Pentatricopeptide repeat-containing protein At3g23020 from Arabidopsis thaliana (Mouse-ear cress).